A 324-amino-acid chain; its full sequence is tRNA U34 carboxymethyltransferase (324 aa).

Residues K91, W105, K110, G130, 152 to 154 (DPS), 181 to 182 (IE), M196, Y200, and R315 each bind carboxy-S-adenosyl-L-methionine.

This sequence belongs to the class I-like SAM-binding methyltransferase superfamily. CmoB family. As to quaternary structure, homotetramer.

The enzyme catalyses carboxy-S-adenosyl-L-methionine + 5-hydroxyuridine(34) in tRNA = 5-carboxymethoxyuridine(34) in tRNA + S-adenosyl-L-homocysteine + H(+). Its function is as follows. Catalyzes carboxymethyl transfer from carboxy-S-adenosyl-L-methionine (Cx-SAM) to 5-hydroxyuridine (ho5U) to form 5-carboxymethoxyuridine (cmo5U) at position 34 in tRNAs. The chain is tRNA U34 carboxymethyltransferase from Aliivibrio fischeri (strain MJ11) (Vibrio fischeri).